Here is a 305-residue protein sequence, read N- to C-terminus: MARRNGNNNFLNIMRSMLSFLDTRIESSDIDASNTPGGVFMNRLRSRLVDLISGRIGDGDDGREDDETRAPPPGRDLRGRGRKVRGSARQEVPSVEERNLVDRCNRMMNETEERPTRERRRTRAVSRGSERNGETERPRSEGVEDPVTLTTSIVVTGDGLGNTQAPSQSAEAQDETGPRSSRTVGSRGFRVVFPRIPSQELRFLFLTPQSEGSRGNIIYEIQINFDVFEASSEAPTTATKESLKKSSIVRAVEADKGCECAICMSNFIKNQRLRVLPCDHRFHVGCVDKWLLGHSNKCPVCRTAI.

The tract at residues 53–185 (SGRIGDGDDG…TGPRSSRTVG (133 aa)) is disordered. Basic and acidic residues-rich tracts occupy residues 95 to 116 (VEERNLVDRCNRMMNETEERPT) and 128 to 142 (GSERNGETERPRSEG). Over residues 161–171 (GNTQAPSQSAE) the composition is skewed to polar residues. The RING-type; atypical zinc-finger motif lies at 260 to 302 (CAICMSNFIKNQRLRVLPCDHRFHVGCVDKWLLGHSNKCPVCR).

This is an uncharacterized protein from Encephalitozoon cuniculi (strain GB-M1) (Microsporidian parasite).